A 300-amino-acid chain; its full sequence is Ankyrin repeat domain-containing protein 54 (300 aa).

Residues 1-27 (MAAAAGDADDEPRSGHSSSEGECAVAP) form a disordered region. At Ala-2 the chain carries N-acetylalanine. A phosphoserine mark is found at Ser-58 and Ser-63. The Nuclear localization signal (NLS) motif lies at 99–117 (RRLGPTGKEVHALKRLRDS). 4 ANK repeats span residues 109 to 138 (HALK…DPCA), 142 to 171 (KGRT…DPNQ), 175 to 204 (LGNT…RVDA), and 208 to 244 (AGRT…IIHM). Residues 141 to 241 (DKGRTALHFA…EAVRLEVKQI (101 aa)) are LYN-binding. A Nuclear export signal (NES) motif is present at residues 283–293 (LLASFTSLSLQ).

Interacts (via ankyrin repeat region) with LYN (via SH3-domain) in an activation-independent status of LYN. Forms a multiprotein complex with LYN and HCLS1. Interacts with TSN2, VAV1, DBNL and LASP1.

The protein localises to the nucleus. The protein resides in the cytoplasm. It is found in the midbody. In terms of biological role, plays an important role in regulating intracellular signaling events associated with erythroid terminal differentiation. In Homo sapiens (Human), this protein is Ankyrin repeat domain-containing protein 54 (ANKRD54).